A 416-amino-acid chain; its full sequence is Gamma-glutamyl phosphate reductase (416 aa).

This sequence belongs to the gamma-glutamyl phosphate reductase family.

The protein localises to the cytoplasm. It catalyses the reaction L-glutamate 5-semialdehyde + phosphate + NADP(+) = L-glutamyl 5-phosphate + NADPH + H(+). It participates in amino-acid biosynthesis; L-proline biosynthesis; L-glutamate 5-semialdehyde from L-glutamate: step 2/2. Catalyzes the NADPH-dependent reduction of L-glutamate 5-phosphate into L-glutamate 5-semialdehyde and phosphate. The product spontaneously undergoes cyclization to form 1-pyrroline-5-carboxylate. The sequence is that of Gamma-glutamyl phosphate reductase from Salmonella typhi.